Here is a 236-residue protein sequence, read N- to C-terminus: Small ribosomal subunit protein uS2c (236 aa).

Belongs to the universal ribosomal protein uS2 family.

It is found in the plastid. The protein localises to the chloroplast. The sequence is that of Small ribosomal subunit protein uS2c (rps2) from Nymphaea alba (White water-lily).